Consider the following 437-residue polypeptide: Matrix remodeling-associated protein 8 (437 aa).

The signal sequence occupies residues 1-22 (MEQLAKLLLWQLLLQQSSVVYL). The Extracellular portion of the chain corresponds to 23–339 (YSVPADASNP…PESRIHFFQQ (317 aa)). Ig-like V-type domains follow at residues 32–159 (PDSV…LDIT) and 167–294 (EYWD…VFVT). 4 N-linked (GlcNAc...) asparagine glycosylation sites follow: N41, N121, N246, and N304. Cystine bridges form between C54-C139 and C188-C274. Residues 340–360 (LGYVLATLLLFVVLLIIVVFI) traverse the membrane as a helical segment. The Cytoplasmic portion of the chain corresponds to 361–437 (TRKRRQRGYE…DKDFRKEYCK (77 aa)).

In terms of assembly, homodimer in cis. Does not appear to form trans-homodimers.

The protein resides in the cell membrane. In terms of biological role, transmembrane protein which can modulate activity of various signaling pathways, probably via binding to integrin ITGAV:ITGB3. Mediates heterophilic cell-cell interactions in vitro. The sequence is that of Matrix remodeling-associated protein 8 (MXRA8) from Gallus gallus (Chicken).